A 192-amino-acid polypeptide reads, in one-letter code: NADH dehydrogenase [ubiquinone] iron-sulfur protein 3 (192 aa).

It belongs to the complex I 30 kDa subunit family. In terms of assembly, complex I is composed of about 45 different subunits. This is a component of the iron-sulfur (IP) fragment of the enzyme.

Its subcellular location is the mitochondrion inner membrane. The catalysed reaction is a ubiquinone + NADH + 5 H(+)(in) = a ubiquinol + NAD(+) + 4 H(+)(out). In terms of biological role, core subunit of the mitochondrial membrane respiratory chain NADH dehydrogenase (Complex I) that is believed to belong to the minimal assembly required for catalysis. Complex I functions in the transfer of electrons from NADH to the respiratory chain. The immediate electron acceptor for the enzyme is believed to be ubiquinone. The protein is NADH dehydrogenase [ubiquinone] iron-sulfur protein 3 (NAD9) of Beta vulgaris (Sugar beet).